Consider the following 360-residue polypeptide: Abhydrolase domain-containing protein lid-1 (360 aa).

The 131-residue stretch at Ala73 to Tyr203 folds into the AB hydrolase-1 domain.

The protein belongs to the peptidase S33 family. ABHD4/ABHD5 subfamily. In terms of assembly, interacts with atgl-1.

It is found in the lipid droplet. Acts coordinately with atgl-1 within the lipolytic cascade to distribute stored energy to tissues during nutritional deprivation. The protein is Abhydrolase domain-containing protein lid-1 of Caenorhabditis elegans.